Consider the following 161-residue polypeptide: uncharacterized protein (161 aa).

This is an uncharacterized protein from Homo sapiens (Human).